Consider the following 354-residue polypeptide: Guanine nucleotide-binding protein G(i) subunit alpha-3 (354 aa).

Glycine 2 carries the N-myristoyl glycine lipid modification. The S-palmitoyl cysteine moiety is linked to residue cysteine 3. Residues 32–354 (KEVKLLLLGA…KNNLKECGLY (323 aa)) enclose the G-alpha domain. The tract at residues 35–48 (KLLLLGAGESGKST) is G1 motif. GTP-binding residues include glycine 42, glutamate 43, serine 44, glycine 45, lysine 46, serine 47, threonine 48, aspartate 150, serine 151, leucine 175, arginine 176, threonine 177, arginine 178, valine 179, lysine 180, threonine 181, valine 201, glycine 203, asparagine 269, lysine 270, aspartate 272, leucine 273, cysteine 325, alanine 326, and threonine 327. Serine 47 contacts Mg(2+). Residues 173–181 (DVLRTRVKT) form a G2 motif region. Threonine 181 lines the Mg(2+) pocket. The interval 196–205 (FKMFDVGGQR) is G3 motif. The tract at residues 265–272 (ILFLNKKD) is G4 motif. A G5 motif region spans residues 324 to 329 (TCATDT).

Belongs to the G-alpha family. G(i/o/t/z) subfamily. As to quaternary structure, heterotrimeric G proteins are composed of 3 units; alpha, beta and gamma. The alpha subunit contains the guanine nucleotide binding site. GTP binding causes dissociation of the heterotrimer, liberating the individual subunits so that they can interact with downstream effector proteins. Forms a complex with CCDC88A/GIV and EGFR which leads to enhanced EGFR signaling and triggering of cell migration; ligand stimulation is required for recruitment of GNAI3 to the complex. Interacts (inactive GDP-bound form) with CCDC88A/GIV (via GBA motif); the interaction leads to activation of GNAI3. Interacts (inactive GDP-bound form) with CCDC88C/DAPLE (via GBA motif); the interaction leads to activation of GNAI3. Interacts (inactive GDP-bound form) with NUCB1 (via GBA motif) and NUCB2 (via GBA motif); the interaction leads to activation of GNAI3. Interacts (inactive GDP-bound form) with PLCD4 (via GBA motif); the interaction leads to activation of GNAI3. Interacts with INSR; the interaction is probably mediated by CCDC88A/GIV. Interacts with GPSM1. Interacts (GDP-bound form) with GPSM2 (via GoLoco domains). Does not interact with RGS2. Interacts with RGS8 and RGS10; this strongly enhances the intrinsic GTPase activity. Interacts with RGS12. Interacts with RGS16; this strongly enhances the intrinsic GTPase activity. Interacts (via active GTP- or inactive GDP-bound form) with RGS14. Interacts (via active GTP-bound form) with TRPC5 (via ANK repeats) in a homotetrameric ion channel; the interaction is direct and activates the channel activity. Ubiquitous.

It is found in the cytoplasm. Its subcellular location is the cell membrane. The protein resides in the cytoskeleton. The protein localises to the microtubule organizing center. It localises to the centrosome. Heterotrimeric guanine nucleotide-binding proteins (G proteins) function as transducers downstream of G protein-coupled receptors (GPCRs) in numerous signaling cascades. The alpha chain contains the guanine nucleotide binding site and alternates between an active, GTP-bound state and an inactive, GDP-bound state. Signaling by an activated GPCR promotes GDP release and GTP binding. The alpha subunit has a low GTPase activity that converts bound GTP to GDP, thereby terminating the signal. Both GDP release and GTP hydrolysis are modulated by numerous regulatory proteins. Signaling is mediated via effector proteins, such as adenylate cyclase. Inhibits adenylate cyclase activity, leading to decreased intracellular cAMP levels. Stimulates the activity of receptor-regulated K(+) channels. The active GTP-bound form prevents the association of RGS14 with centrosomes and is required for the translocation of RGS14 from the cytoplasm to the plasma membrane. May play a role in cell division. The active GTP-bound form activates the calcium permeant TRPC5 ion channels. The polypeptide is Guanine nucleotide-binding protein G(i) subunit alpha-3 (Gnai3) (Rattus norvegicus (Rat)).